A 400-amino-acid chain; its full sequence is CCA-adding enzyme (400 aa).

2 residues coordinate ATP: Gly28 and Arg31. The CTP site is built by Gly28 and Arg31. Positions 41 and 43 each coordinate Mg(2+). Arg112, Asp155, Arg158, Arg161, and Arg164 together coordinate ATP. Arg112, Asp155, Arg158, Arg161, and Arg164 together coordinate CTP.

This sequence belongs to the tRNA nucleotidyltransferase/poly(A) polymerase family. Bacterial CCA-adding enzyme type 3 subfamily. As to quaternary structure, homodimer. It depends on Mg(2+) as a cofactor.

It catalyses the reaction a tRNA precursor + 2 CTP + ATP = a tRNA with a 3' CCA end + 3 diphosphate. It carries out the reaction a tRNA with a 3' CCA end + 2 CTP + ATP = a tRNA with a 3' CCACCA end + 3 diphosphate. Catalyzes the addition and repair of the essential 3'-terminal CCA sequence in tRNAs without using a nucleic acid template. Adds these three nucleotides in the order of C, C, and A to the tRNA nucleotide-73, using CTP and ATP as substrates and producing inorganic pyrophosphate. tRNA 3'-terminal CCA addition is required both for tRNA processing and repair. Also involved in tRNA surveillance by mediating tandem CCA addition to generate a CCACCA at the 3' terminus of unstable tRNAs. While stable tRNAs receive only 3'-terminal CCA, unstable tRNAs are marked with CCACCA and rapidly degraded. The chain is CCA-adding enzyme from Staphylococcus aureus (strain MRSA252).